A 375-amino-acid chain; its full sequence is DNA replication and repair protein RecF (375 aa).

30–37 is an ATP binding site; that stretch reads GENAQGKT.

It belongs to the RecF family.

It localises to the cytoplasm. In terms of biological role, the RecF protein is involved in DNA metabolism; it is required for DNA replication and normal SOS inducibility. RecF binds preferentially to single-stranded, linear DNA. It also seems to bind ATP. The protein is DNA replication and repair protein RecF of Bacillus cereus (strain G9842).